Consider the following 378-residue polypeptide: uncharacterized protein (378 aa).

A compositionally biased stretch (basic residues) spans Met-1–Lys-11. The segment at Met-1–Gly-23 is disordered.

This is an uncharacterized protein from Caenorhabditis elegans.